A 134-amino-acid chain; its full sequence is MNTEPTWMAEVVFDENGLIPAIAQDAETGQILMVAWMNREALAETAATGRAVYWSRSRQRLWRKGEESGHAQDVHELRLDCDGDVILLKVHQNGGIACHTGRASCFYRRLEGTASQAEWITIDPVLKDPELIYK.

Aspartate 80 lines the Mg(2+) pocket. Residue cysteine 81 coordinates Zn(2+). Positions 82 and 84 each coordinate Mg(2+). Positions 98 and 105 each coordinate Zn(2+).

Belongs to the PRA-CH family. In terms of assembly, homodimer. Mg(2+) serves as cofactor. It depends on Zn(2+) as a cofactor.

The protein localises to the cytoplasm. The enzyme catalyses 1-(5-phospho-beta-D-ribosyl)-5'-AMP + H2O = 1-(5-phospho-beta-D-ribosyl)-5-[(5-phospho-beta-D-ribosylamino)methylideneamino]imidazole-4-carboxamide. Its pathway is amino-acid biosynthesis; L-histidine biosynthesis; L-histidine from 5-phospho-alpha-D-ribose 1-diphosphate: step 3/9. Catalyzes the hydrolysis of the adenine ring of phosphoribosyl-AMP. The polypeptide is Phosphoribosyl-AMP cyclohydrolase (Bordetella bronchiseptica (strain ATCC BAA-588 / NCTC 13252 / RB50) (Alcaligenes bronchisepticus)).